Here is a 398-residue protein sequence, read N- to C-terminus: Glutamyl-tRNA reductase (398 aa).

Residues 45–48 (TCNR), serine 88, 93–95 (EDQ), and glutamine 99 each bind substrate. Cysteine 46 acts as the Nucleophile in catalysis. 168-173 (GAGKMG) serves as a coordination point for NADP(+).

Belongs to the glutamyl-tRNA reductase family. Homodimer.

It carries out the reaction (S)-4-amino-5-oxopentanoate + tRNA(Glu) + NADP(+) = L-glutamyl-tRNA(Glu) + NADPH + H(+). It participates in porphyrin-containing compound metabolism; protoporphyrin-IX biosynthesis; 5-aminolevulinate from L-glutamyl-tRNA(Glu): step 1/2. Its function is as follows. Catalyzes the NADPH-dependent reduction of glutamyl-tRNA(Glu) to glutamate 1-semialdehyde (GSA). The sequence is that of Glutamyl-tRNA reductase (hemA) from Methanothermobacter marburgensis (strain ATCC BAA-927 / DSM 2133 / JCM 14651 / NBRC 100331 / OCM 82 / Marburg) (Methanobacterium thermoautotrophicum).